The primary structure comprises 572 residues: Urease subunit alpha (572 aa).

Positions 136–572 (GGIDTHIHWI…VPLAQRYFLF (437 aa)) constitute a Urease domain. Ni(2+) is bound by residues His-141, His-143, and Lys-224. Lys-224 bears the N6-carboxylysine mark. His-226 lines the substrate pocket. Ni(2+)-binding residues include His-253 and His-279. His-327 functions as the Proton donor in the catalytic mechanism. Asp-367 is a Ni(2+) binding site.

The protein belongs to the metallo-dependent hydrolases superfamily. Urease alpha subunit family. In terms of assembly, heterotrimer of UreA (gamma), UreB (beta) and UreC (alpha) subunits. Three heterotrimers associate to form the active enzyme. The cofactor is Ni cation. Post-translationally, carboxylation allows a single lysine to coordinate two nickel ions.

The protein localises to the cytoplasm. The catalysed reaction is urea + 2 H2O + H(+) = hydrogencarbonate + 2 NH4(+). It functions in the pathway nitrogen metabolism; urea degradation; CO(2) and NH(3) from urea (urease route): step 1/1. The polypeptide is Urease subunit alpha (Actinobacillus pleuropneumoniae serotype 3 (strain JL03)).